The sequence spans 526 residues: 2-succinyl-5-enolpyruvyl-6-hydroxy-3-cyclohexene-1-carboxylate synthase (526 aa).

It belongs to the TPP enzyme family. MenD subfamily. Homodimer. It depends on Mg(2+) as a cofactor. Requires Mn(2+) as cofactor. Thiamine diphosphate is required as a cofactor.

It catalyses the reaction isochorismate + 2-oxoglutarate + H(+) = 5-enolpyruvoyl-6-hydroxy-2-succinyl-cyclohex-3-ene-1-carboxylate + CO2. It functions in the pathway quinol/quinone metabolism; 1,4-dihydroxy-2-naphthoate biosynthesis; 1,4-dihydroxy-2-naphthoate from chorismate: step 2/7. It participates in quinol/quinone metabolism; menaquinone biosynthesis. Catalyzes the thiamine diphosphate-dependent decarboxylation of 2-oxoglutarate and the subsequent addition of the resulting succinic semialdehyde-thiamine pyrophosphate anion to isochorismate to yield 2-succinyl-5-enolpyruvyl-6-hydroxy-3-cyclohexene-1-carboxylate (SEPHCHC). This is 2-succinyl-5-enolpyruvyl-6-hydroxy-3-cyclohexene-1-carboxylate synthase from Bdellovibrio bacteriovorus (strain ATCC 15356 / DSM 50701 / NCIMB 9529 / HD100).